Reading from the N-terminus, the 195-residue chain is Large ribosomal subunit protein bL25 (195 aa).

The protein belongs to the bacterial ribosomal protein bL25 family. CTC subfamily. Part of the 50S ribosomal subunit; part of the 5S rRNA/L5/L18/L25 subcomplex. Contacts the 5S rRNA. Binds to the 5S rRNA independently of L5 and L18.

In terms of biological role, this is one of the proteins that binds to the 5S RNA in the ribosome where it forms part of the central protuberance. The sequence is that of Large ribosomal subunit protein bL25 from Geobacter metallireducens (strain ATCC 53774 / DSM 7210 / GS-15).